Consider the following 318-residue polypeptide: Aspartate carbamoyltransferase catalytic subunit (318 aa).

2 residues coordinate carbamoyl phosphate: Arg-58 and Thr-59. Lys-86 is an L-aspartate binding site. 3 residues coordinate carbamoyl phosphate: Arg-108, His-141, and Gln-144. The L-aspartate site is built by Arg-174 and Arg-226. Carbamoyl phosphate contacts are provided by Gly-270 and Pro-271.

Belongs to the aspartate/ornithine carbamoyltransferase superfamily. ATCase family. Heterododecamer (2C3:3R2) of six catalytic PyrB chains organized as two trimers (C3), and six regulatory PyrI chains organized as three dimers (R2).

It catalyses the reaction carbamoyl phosphate + L-aspartate = N-carbamoyl-L-aspartate + phosphate + H(+). The protein operates within pyrimidine metabolism; UMP biosynthesis via de novo pathway; (S)-dihydroorotate from bicarbonate: step 2/3. Catalyzes the condensation of carbamoyl phosphate and aspartate to form carbamoyl aspartate and inorganic phosphate, the committed step in the de novo pyrimidine nucleotide biosynthesis pathway. This Lactobacillus delbrueckii subsp. bulgaricus (strain ATCC BAA-365 / Lb-18) protein is Aspartate carbamoyltransferase catalytic subunit.